A 379-amino-acid polypeptide reads, in one-letter code: Dual-specificity RNA methyltransferase RlmN (379 aa).

Glu90 (proton acceptor) is an active-site residue. The 253-residue stretch at 96 to 348 (EPSRGTLCVS…TTVRKTRGDD (253 aa)) folds into the Radical SAM core domain. A disulfide bridge links Cys103 with Cys353. Residues Cys110, Cys114, and Cys117 each contribute to the [4Fe-4S] cluster site. S-adenosyl-L-methionine is bound by residues 179–180 (GE), Ser211, 233–235 (SLH), and Asn310. Cys353 acts as the S-methylcysteine intermediate in catalysis.

Belongs to the radical SAM superfamily. RlmN family. It depends on [4Fe-4S] cluster as a cofactor.

It localises to the cytoplasm. The catalysed reaction is adenosine(2503) in 23S rRNA + 2 reduced [2Fe-2S]-[ferredoxin] + 2 S-adenosyl-L-methionine = 2-methyladenosine(2503) in 23S rRNA + 5'-deoxyadenosine + L-methionine + 2 oxidized [2Fe-2S]-[ferredoxin] + S-adenosyl-L-homocysteine. The enzyme catalyses adenosine(37) in tRNA + 2 reduced [2Fe-2S]-[ferredoxin] + 2 S-adenosyl-L-methionine = 2-methyladenosine(37) in tRNA + 5'-deoxyadenosine + L-methionine + 2 oxidized [2Fe-2S]-[ferredoxin] + S-adenosyl-L-homocysteine. Specifically methylates position 2 of adenine 2503 in 23S rRNA and position 2 of adenine 37 in tRNAs. m2A2503 modification seems to play a crucial role in the proofreading step occurring at the peptidyl transferase center and thus would serve to optimize ribosomal fidelity. The polypeptide is Dual-specificity RNA methyltransferase RlmN (Nitrosomonas europaea (strain ATCC 19718 / CIP 103999 / KCTC 2705 / NBRC 14298)).